Reading from the N-terminus, the 78-residue chain is Major outer membrane lipoprotein Lpp (78 aa).

The N-terminal stretch at 1 to 19 (MKAKIVLGAVILASGLLAG) is a signal peptide. C20 is lipidated: N-palmitoyl cysteine. A lipid anchor (S-diacylglycerol cysteine) is attached at C20. Repeats lie at residues 25–35 (NAQLDQISSDV) and 39–49 (NTQVQQLSSDV). Residues 28–62 (LDQISSDVNRLNTQVQQLSSDVQSANAQAKAAYEA) adopt a coiled-coil conformation. K78 carries the N6-murein peptidoglycan lysine modification.

It belongs to the Lpp family. Homotrimer.

Its subcellular location is the cell outer membrane. It is found in the secreted. The protein resides in the cell wall. In terms of biological role, a highly abundant outer membrane lipoprotein that controls the distance between the inner and outer membranes. The only protein known to be covalently linked to the peptidoglycan network (PGN). Also non-covalently binds the PGN. The link between the cell outer membrane and PGN contributes to maintenance of the structural and functional integrity of the cell envelope, and maintains the correct distance between the PGN and the outer membrane. In Proteus mirabilis, this protein is Major outer membrane lipoprotein Lpp.